Consider the following 117-residue polypeptide: Pancreatic progenitor cell differentiation and proliferation factor A (117 aa).

The segment at 22–46 is disordered; sequence GSTSSNSSCSSSEYTGEVIPHPPGL. The span at 23-33 shows a compositional bias: low complexity; it reads STSSNSSCSSS.

It belongs to the PPDPF family. Expressed exclusively in the exocrine cells during pancreas development.

Probable regulator of exocrine pancreas development. The protein is Pancreatic progenitor cell differentiation and proliferation factor A (ppdpfa) of Danio rerio (Zebrafish).